The primary structure comprises 226 residues: Fibronectin type III domain-containing protein 10 (226 aa).

A signal peptide spans methionine 1 to alanine 20. Residues alanine 21–aspartate 182 lie on the Extracellular side of the membrane. The Fibronectin type-III domain maps to proline 74–glutamate 166. N-linked (GlcNAc...) asparagine glycosylation is found at asparagine 86 and asparagine 109. Residues isoleucine 183–leucine 203 form a helical membrane-spanning segment. Topologically, residues leucine 204–proline 226 are cytoplasmic.

The protein localises to the membrane. The protein is Fibronectin type III domain-containing protein 10 (FNDC10) of Homo sapiens (Human).